Reading from the N-terminus, the 358-residue chain is DNA replication and repair protein RecF (358 aa).

An ATP-binding site is contributed by 33-40 (GENGAGKT).

The protein belongs to the RecF family.

Its subcellular location is the cytoplasm. Functionally, the RecF protein is involved in DNA metabolism; it is required for DNA replication and normal SOS inducibility. RecF binds preferentially to single-stranded, linear DNA. It also seems to bind ATP. The polypeptide is DNA replication and repair protein RecF (Deinococcus geothermalis (strain DSM 11300 / CIP 105573 / AG-3a)).